The following is a 502-amino-acid chain: MTEKKYIVALDQGTTSSRAVVMDHDANIVSVSQREFEQIYPKPGWVEHDPMEIWASQSSTLVEVLAKADISSDQIAAIGITNQRETAIVWERETGKPIYNAIVWQCRRTADICEQLKRNGLEDYIRDNTGLVVDPYFSGTKVKWILDHVEGSRERAKRGELLFGTVDTWLIWKMTQGRVHVTDYTNASRTMLFNIHDLDWDEKMLDVLDIPRAMLPQVRKSSEVYGQTNIGGKGGTRIPIAGIAGDQQAALFGQLCVKEGMAKNTYGTGCFMLMNTGEKAVKSENGLLTTIACGPSGEVNYALEGAVFMAGASIQWLRDEMKLISDAFDSEYFATKVKDTNGVYVVPAFTGLGAPYWDPYARGAIFGLTRGVNSNHIIRATLESIAYQTRDVLEAMQADSGIRLHALRVDGGAVANNFLMQFQSDILGTRVERPEVREVTALGAAYLAGLAVGYWQNLDELQEKAVIEREFRPGIETTERNYRYSGWKKAVQRAMAWEEHDK.

Thr-14 contacts ADP. The ATP site is built by Thr-14, Thr-15, and Ser-16. Thr-14 is a binding site for sn-glycerol 3-phosphate. Arg-18 lines the ADP pocket. The sn-glycerol 3-phosphate site is built by Arg-84, Glu-85, Tyr-136, and Asp-246. Glycerol is bound by residues Arg-84, Glu-85, Tyr-136, Asp-246, and Gln-247. Thr-268 and Gly-311 together coordinate ADP. Residues Thr-268, Gly-311, Gln-315, and Gly-412 each coordinate ATP. Residues Gly-412 and Asn-416 each coordinate ADP.

This sequence belongs to the FGGY kinase family. Homotetramer and homodimer (in equilibrium). Heterodimer with EIIA-Glc. Binds 1 zinc ion per glycerol kinase EIIA-Glc dimer. The zinc ion is important for dimerization.

The catalysed reaction is glycerol + ATP = sn-glycerol 3-phosphate + ADP + H(+). It functions in the pathway polyol metabolism; glycerol degradation via glycerol kinase pathway; sn-glycerol 3-phosphate from glycerol: step 1/1. Activity of this regulatory enzyme is affected by several metabolites. Allosterically and non-competitively inhibited by fructose 1,6-bisphosphate (FBP) and unphosphorylated phosphocarrier protein EIIA-Glc (III-Glc), an integral component of the bacterial phosphotransferase (PTS) system. In terms of biological role, key enzyme in the regulation of glycerol uptake and metabolism. Catalyzes the phosphorylation of glycerol to yield sn-glycerol 3-phosphate. The chain is Glycerol kinase from Salmonella arizonae (strain ATCC BAA-731 / CDC346-86 / RSK2980).